Reading from the N-terminus, the 210-residue chain is Large ribosomal subunit protein uL3 (210 aa).

A disordered region spans residues 125–151 (HGFGGGPRTHGQSDRLRAPGSIGAGTD).

This sequence belongs to the universal ribosomal protein uL3 family. In terms of assembly, part of the 50S ribosomal subunit. Forms a cluster with proteins L14 and L19.

In terms of biological role, one of the primary rRNA binding proteins, it binds directly near the 3'-end of the 23S rRNA, where it nucleates assembly of the 50S subunit. The sequence is that of Large ribosomal subunit protein uL3 from Roseiflexus sp. (strain RS-1).